We begin with the raw amino-acid sequence, 318 residues long: Probable arabinan endo-1,5-alpha-L-arabinosidase C (318 aa).

Residues 1-28 (MLSFVLLLCVALVNAYSDPGACSGTCWA) form the signal peptide. The Proton acceptor role is filled by D30. N-linked (GlcNAc...) asparagine glycans are attached at residues N72, N80, and N188. The active-site Proton donor is the E196. The N-linked (GlcNAc...) asparagine glycan is linked to N277.

The protein belongs to the glycosyl hydrolase 43 family.

It is found in the secreted. It carries out the reaction Endohydrolysis of (1-&gt;5)-alpha-arabinofuranosidic linkages in (1-&gt;5)-arabinans.. The protein operates within glycan metabolism; L-arabinan degradation. Endo-1,5-alpha-L-arabinanase involved in degradation of pectin. Its preferred substrate is linear 1,5-alpha-L-arabinan. This is Probable arabinan endo-1,5-alpha-L-arabinosidase C (abnC) from Aspergillus niger (strain ATCC MYA-4892 / CBS 513.88 / FGSC A1513).